The sequence spans 327 residues: Ankyrin repeat domain-containing protein SOWAHD (327 aa).

Residues Met1–Asp31 are disordered. 3 ANK repeats span residues Cys112–Ser141, Asp147–Gly162, and Pro186–Asp216. Residues Glu251–Gly311 are disordered. Positions Asn260 to Arg275 are enriched in low complexity. A compositionally biased stretch (basic and acidic residues) spans His292–Ala305.

This sequence belongs to the SOWAH family.

This Mus musculus (Mouse) protein is Ankyrin repeat domain-containing protein SOWAHD (Sowahd).